The sequence spans 150 residues: uncharacterized protein (150 aa).

This is an uncharacterized protein from Streptomyces lincolnensis.